The sequence spans 150 residues: Early 4 ORF6/7 control protein (150 aa).

Positions 1–31 (MTTSGVPFGMTLRPTRSRLSRRTPYSRDRLP) are disordered. The short motif at 1 to 58 (MTTSGVPFGMTLRPTRSRLSRRTPYSRDRLPPFETETRATILEDHPLLPECNTLTMHN) is the Nuclear localization signal element.

The protein belongs to the adenoviridae E4-orf6/7 family. As to quaternary structure, interacts with host E2F proteins.

It is found in the host nucleus. Its function is as follows. Modulates viral and host transcriptional activity to promote viral genome replication. Stimulates viral E2a promoter activity by binding and inducing dimerization of host E2F. During viral infection E1A protein binds to cellular retinablastoma (RB) family members and dissociates these repressors from a complex with E2F proteins. Free E2F is then bound to E4orf6/7 which leads to transactivation of viral E2 promoter, and cellular promoters such as E2F-1 promoter. Activation of cellular E2F targets promote cell cycle S phase and thereby possibly favorises viral DNA replication process. The polypeptide is Early 4 ORF6/7 control protein (Human adenovirus C serotype 2 (HAdV-2)).